We begin with the raw amino-acid sequence, 75 residues long: Mating pheromone Er-10 (75 aa).

An N-terminal signal peptide occupies residues 1 to 19 (MNKLAILAIIAMVLFSANA). Residues 20–37 (FRFQSRIRSNVEAKTETR) constitute a propeptide that is removed on maturation. 3 cysteine pairs are disulfide-bonded: C40–C56, C47–C74, and C52–C64.

As to quaternary structure, homodimer.

The protein resides in the secreted. In terms of biological role, mating ciliate pheromones (or gamones) are diffusible extracellular communication signals that distinguish different intraspecific classes of cells commonly referred to as 'mating types'. They prepare the latter for conjugation by changing their cell surface properties. The polypeptide is Mating pheromone Er-10 (MAT10) (Euplotes raikovi).